We begin with the raw amino-acid sequence, 351 residues long: Phosphate acyltransferase (351 aa).

Belongs to the PlsX family. In terms of assembly, homodimer. Probably interacts with PlsY.

The protein resides in the cytoplasm. The catalysed reaction is a fatty acyl-[ACP] + phosphate = an acyl phosphate + holo-[ACP]. It functions in the pathway lipid metabolism; phospholipid metabolism. Its function is as follows. Catalyzes the reversible formation of acyl-phosphate (acyl-PO(4)) from acyl-[acyl-carrier-protein] (acyl-ACP). This enzyme utilizes acyl-ACP as fatty acyl donor, but not acyl-CoA. This Verminephrobacter eiseniae (strain EF01-2) protein is Phosphate acyltransferase.